The sequence spans 194 residues: Ancillary SecYEG translocon subunit (194 aa).

Topologically, residues 1-10 (MHLNKMKKVS) are cytoplasmic. A helical membrane pass occupies residues 11 to 31 (LKTYLVLFFLIFFIFCSFWFI). Residues 32-194 (KPKEKKLKLE…INMKINEIKR (163 aa)) lie on the Periplasmic side of the membrane.

Belongs to the YfgM family. In terms of assembly, interacts with the SecYEG translocon. Forms a complex with PpiD.

It is found in the cell inner membrane. May mediate protein transfer from the SecYEG translocon to the periplasmic chaperone network via its periplasmic C-terminal region. The protein is Ancillary SecYEG translocon subunit of Buchnera aphidicola subsp. Schizaphis graminum (strain Sg).